Here is an 83-residue protein sequence, read N- to C-terminus: Mitotic-spindle organizing protein 1 (83 aa).

The protein belongs to the MOZART1 family. As to quaternary structure, part of the gamma-tubulin complex.

Its subcellular location is the cytoplasm. It is found in the cytoskeleton. The protein localises to the microtubule organizing center. It localises to the spindle pole body. Required for gamma-tubulin complex recruitment to the microtubule organizing center (MTOC). This is Mitotic-spindle organizing protein 1 from Botryotinia fuckeliana (strain B05.10) (Noble rot fungus).